The chain runs to 414 residues: Tryptophan synthase beta chain (414 aa).

Position 105 is an N6-(pyridoxal phosphate)lysine (lysine 105).

This sequence belongs to the TrpB family. In terms of assembly, tetramer of two alpha and two beta chains. Pyridoxal 5'-phosphate serves as cofactor.

The catalysed reaction is (1S,2R)-1-C-(indol-3-yl)glycerol 3-phosphate + L-serine = D-glyceraldehyde 3-phosphate + L-tryptophan + H2O. Its pathway is amino-acid biosynthesis; L-tryptophan biosynthesis; L-tryptophan from chorismate: step 5/5. In terms of biological role, the beta subunit is responsible for the synthesis of L-tryptophan from indole and L-serine. This Gloeobacter violaceus (strain ATCC 29082 / PCC 7421) protein is Tryptophan synthase beta chain.